Consider the following 517-residue polypeptide: RNA-binding region-containing protein 3 (517 aa).

Positions 1-26 (MAAPEQPLAISRGCTSSSSLSPPRGD) are disordered. Serine 21 bears the Phosphoserine mark. The 76-residue stretch at 27-102 (RTLLVRHLPA…HTLVVEFAKE (76 aa)) folds into the RRM 1 domain. Disordered regions lie at residues 106-130 (VHSPCPTSGSEKKKRSDDPVEDDKE) and 213-254 (MPLH…DEDR). Residue serine 108 is modified to Phosphoserine. Basic and acidic residues predominate over residues 115–130 (SEKKKRSDDPVEDDKE). The segment covering 217–230 (APLPPTSPQPPEEP) has biased composition (pro residues). Residues 231-252 (PLPEEDEELSSEESEYESTDDE) are compositionally biased toward acidic residues. The 84-residue stretch at 420 to 503 (CRIYVKNLAK…KPMVVQFARS (84 aa)) folds into the RRM 2 domain.

As to quaternary structure, component of the U11/U12 snRNPs that are part of the U12-type spliceosome. Found in a complex with m(7)G-capped U12 snRNA. Interacts with PDCD7.

The protein localises to the nucleus. Its function is as follows. Participates in pre-mRNA U12-dependent splicing, performed by the minor spliceosome which removes U12-type introns. U12-type introns comprises less than 1% of all non-coding sequences. Binds to the 3'-stem-loop of m(7)G-capped U12 snRNA. This is RNA-binding region-containing protein 3 (RNPC3) from Pongo abelii (Sumatran orangutan).